The following is a 719-amino-acid chain: Potassium channel KOR2 (719 aa).

The Cytoplasmic portion of the chain corresponds to 1–63 (MAEEYELNEI…VIHPNGRWYR (63 aa)). Residues 64–84 (IWANMMFLWSIYSTFFTPFEF) form a helical membrane-spanning segment. Residues 85–93 (SFFRGLPDQ) lie on the Extracellular side of the membrane. A helical transmembrane segment spans residues 94 to 114 (LLDLECVQLVFLADVAVHFFL). Residues 115-137 (AYRDPHTYRMVHDKRHIALRYIK) are Cytoplasmic-facing. The helical transmembrane segment at 138 to 158 (GSFALDVLGCFPWDAIYKVTG) threads the bilayer. At 159 to 164 (RVEAVR) the chain is on the extracellular side. The helical; Voltage-sensor transmembrane segment at 165–185 (WLVWVRLYRGRKVMAFFKRVE) threads the bilayer. Residues 186 to 199 (KDIRVSYLLTRIVK) are Cytoplasmic-facing. The chain crosses the membrane as a helical span at residues 200-220 (LITVELYCTHTAACGFYYLAT). At 221 to 255 (TLPPAREGGTWIGSLSLGDARYINFREVDLLTRYV) the chain is on the extracellular side. An intramembrane region (pore-forming) is located at residues 256 to 275 (TSLYLAIVTMATVGYGDIHA). Over 276 to 285 (VNTREMAFTV) the chain is Extracellular. A helical transmembrane segment spans residues 286–306 (VYISFSIVLSAYLIGNMTALI). The Cytoplasmic segment spans residues 307 to 719 (VKGSRTERFR…LEQARTVATN (413 aa)). 383 to 503 (LFRGCSDDFL…SQILSNLLKG (121 aa)) serves as a coordination point for a nucleoside 3',5'-cyclic phosphate. 5 ANK repeats span residues 523-556 (KQES…DPSK), 560-589 (DGRT…NVNS), 593-622 (FGNS…ILNL), 624-653 (DAGG…SPNC), and 657-686 (DQRT…DIQA).

This sequence belongs to the potassium channel family. Plant (TC 1.A.1.4) subfamily.

The protein resides in the membrane. Its function is as follows. Probable outward-rectifying potassium channel. This Oryza sativa subsp. japonica (Rice) protein is Potassium channel KOR2.